Here is a 212-residue protein sequence, read N- to C-terminus: ATP-dependent Clp protease proteolytic subunit 2 (212 aa).

Positions 1 to 20 are disordered; sequence MSHNTSIASQGMPAMAGPET. The active-site Nucleophile is the Ser107. Residue His132 is part of the active site.

The protein belongs to the peptidase S14 family. In terms of assembly, fourteen ClpP subunits assemble into 2 heptameric rings which stack back to back to give a disk-like structure with a central cavity, resembling the structure of eukaryotic proteasomes.

It localises to the cytoplasm. The enzyme catalyses Hydrolysis of proteins to small peptides in the presence of ATP and magnesium. alpha-casein is the usual test substrate. In the absence of ATP, only oligopeptides shorter than five residues are hydrolyzed (such as succinyl-Leu-Tyr-|-NHMec, and Leu-Tyr-Leu-|-Tyr-Trp, in which cleavage of the -Tyr-|-Leu- and -Tyr-|-Trp bonds also occurs).. In terms of biological role, cleaves peptides in various proteins in a process that requires ATP hydrolysis. Has a chymotrypsin-like activity. Plays a major role in the degradation of misfolded proteins. The protein is ATP-dependent Clp protease proteolytic subunit 2 of Cutibacterium acnes (strain DSM 16379 / KPA171202) (Propionibacterium acnes).